Reading from the N-terminus, the 908-residue chain is Translation initiation factor IF-2 (908 aa).

The disordered stretch occupies residues 145–312 (EIPGLTQRAK…KGKKRQAEKI (168 aa)). The span at 167 to 177 (VVERPEARPSA) shows a compositional bias: basic and acidic residues. Low complexity-rich tracts occupy residues 194–217 (RPEG…PRPG) and 263–276 (VAGA…GAAV). Over residues 278–296 (KRKEEFKKTELFEKHERVF) the composition is skewed to basic and acidic residues. One can recognise a tr-type G domain in the interval 408-577 (KRPPVVTIMG…LLQADVLELK (170 aa)). Residues 417 to 424 (GHVDHGKT) are G1. 417-424 (GHVDHGKT) lines the GTP pocket. The G2 stretch occupies residues 442–446 (GITQH). A G3 region spans residues 463 to 466 (DTPG). GTP-binding positions include 463 to 467 (DTPGH) and 517 to 520 (NKID). Positions 517-520 (NKID) are G4. The tract at residues 553–555 (SAK) is G5.

It belongs to the TRAFAC class translation factor GTPase superfamily. Classic translation factor GTPase family. IF-2 subfamily.

It is found in the cytoplasm. Its function is as follows. One of the essential components for the initiation of protein synthesis. Protects formylmethionyl-tRNA from spontaneous hydrolysis and promotes its binding to the 30S ribosomal subunits. Also involved in the hydrolysis of GTP during the formation of the 70S ribosomal complex. The sequence is that of Translation initiation factor IF-2 from Geotalea daltonii (strain DSM 22248 / JCM 15807 / FRC-32) (Geobacter daltonii).